The sequence spans 207 residues: Guanylate kinase (207 aa).

Residues 4-184 (GTLYIVSAPS…ALSDLKTIIR (181 aa)) form the Guanylate kinase-like domain. 11–18 (APSGAGKS) serves as a coordination point for ATP.

Belongs to the guanylate kinase family.

Its subcellular location is the cytoplasm. It carries out the reaction GMP + ATP = GDP + ADP. In terms of biological role, essential for recycling GMP and indirectly, cGMP. The sequence is that of Guanylate kinase from Yersinia pestis bv. Antiqua (strain Antiqua).